The primary structure comprises 99 residues: Acylphosphatase (99 aa).

An Acylphosphatase-like domain is found at 5 to 97; the sequence is VRQVMIRGRV…RPGERFSQLP (93 aa). Catalysis depends on residues R20 and N38.

This sequence belongs to the acylphosphatase family.

It carries out the reaction an acyl phosphate + H2O = a carboxylate + phosphate + H(+). The chain is Acylphosphatase (acyP) from Nitrobacter winogradskyi (strain ATCC 25391 / DSM 10237 / CIP 104748 / NCIMB 11846 / Nb-255).